The primary structure comprises 361 residues: Peptide chain release factor 1 (361 aa).

Glutamine 236 bears the N5-methylglutamine mark.

Belongs to the prokaryotic/mitochondrial release factor family. Post-translationally, methylated by PrmC. Methylation increases the termination efficiency of RF1.

The protein resides in the cytoplasm. Peptide chain release factor 1 directs the termination of translation in response to the peptide chain termination codons UAG and UAA. This Lactobacillus delbrueckii subsp. bulgaricus (strain ATCC 11842 / DSM 20081 / BCRC 10696 / JCM 1002 / NBRC 13953 / NCIMB 11778 / NCTC 12712 / WDCM 00102 / Lb 14) protein is Peptide chain release factor 1.